A 122-amino-acid polypeptide reads, in one-letter code: Large ribosomal subunit protein uL14 (122 aa).

It belongs to the universal ribosomal protein uL14 family. In terms of assembly, part of the 50S ribosomal subunit. Forms a cluster with proteins L3 and L19. In the 70S ribosome, L14 and L19 interact and together make contacts with the 16S rRNA in bridges B5 and B8.

Binds to 23S rRNA. Forms part of two intersubunit bridges in the 70S ribosome. This Symbiobacterium thermophilum (strain DSM 24528 / JCM 14929 / IAM 14863 / T) protein is Large ribosomal subunit protein uL14.